Reading from the N-terminus, the 214-residue chain is Probable transaldolase (214 aa).

Lys83 (schiff-base intermediate with substrate) is an active-site residue.

It belongs to the transaldolase family. Type 3B subfamily.

It localises to the cytoplasm. It catalyses the reaction D-sedoheptulose 7-phosphate + D-glyceraldehyde 3-phosphate = D-erythrose 4-phosphate + beta-D-fructose 6-phosphate. Its pathway is carbohydrate degradation; pentose phosphate pathway; D-glyceraldehyde 3-phosphate and beta-D-fructose 6-phosphate from D-ribose 5-phosphate and D-xylulose 5-phosphate (non-oxidative stage): step 2/3. Transaldolase is important for the balance of metabolites in the pentose-phosphate pathway. This is Probable transaldolase from Geotalea uraniireducens (strain Rf4) (Geobacter uraniireducens).